A 206-amino-acid polypeptide reads, in one-letter code: Large ribosomal subunit protein uL4 (206 aa).

Residues 63-93 form a disordered region; that stretch reads MYKQKGTGRARHHSARAPQFRGGGKAHGPVV. Positions 64–77 are enriched in basic residues; that stretch reads YKQKGTGRARHHSA.

It belongs to the universal ribosomal protein uL4 family. Part of the 50S ribosomal subunit.

One of the primary rRNA binding proteins, this protein initially binds near the 5'-end of the 23S rRNA. It is important during the early stages of 50S assembly. It makes multiple contacts with different domains of the 23S rRNA in the assembled 50S subunit and ribosome. In terms of biological role, forms part of the polypeptide exit tunnel. The protein is Large ribosomal subunit protein uL4 of Sinorhizobium fredii (strain NBRC 101917 / NGR234).